A 97-amino-acid chain; its full sequence is Large ribosomal subunit protein bL28 (97 aa).

It belongs to the bacterial ribosomal protein bL28 family.

This is Large ribosomal subunit protein bL28 from Rickettsia bellii (strain OSU 85-389).